The sequence spans 262 residues: Hydroxyethylthiazole kinase (262 aa).

Residue M43 participates in substrate binding. ATP contacts are provided by R118 and T164. A191 is a binding site for substrate.

The protein belongs to the Thz kinase family. Requires Mg(2+) as cofactor.

It catalyses the reaction 5-(2-hydroxyethyl)-4-methylthiazole + ATP = 4-methyl-5-(2-phosphooxyethyl)-thiazole + ADP + H(+). Its pathway is cofactor biosynthesis; thiamine diphosphate biosynthesis; 4-methyl-5-(2-phosphoethyl)-thiazole from 5-(2-hydroxyethyl)-4-methylthiazole: step 1/1. Functionally, catalyzes the phosphorylation of the hydroxyl group of 4-methyl-5-beta-hydroxyethylthiazole (THZ). The protein is Hydroxyethylthiazole kinase of Cereibacter sphaeroides (strain ATCC 17029 / ATH 2.4.9) (Rhodobacter sphaeroides).